The chain runs to 460 residues: Cysteine--tRNA ligase (460 aa).

C28 is a binding site for Zn(2+). The 'HIGH' region motif lies at 30–40 (MTVYDYCHLGH). C209, H234, and E238 together coordinate Zn(2+). A 'KMSKS' region motif is present at residues 266–270 (KMSKS). ATP is bound at residue K269.

This sequence belongs to the class-I aminoacyl-tRNA synthetase family. In terms of assembly, monomer. Requires Zn(2+) as cofactor.

It localises to the cytoplasm. The catalysed reaction is tRNA(Cys) + L-cysteine + ATP = L-cysteinyl-tRNA(Cys) + AMP + diphosphate. The protein is Cysteine--tRNA ligase of Pseudomonas syringae pv. tomato (strain ATCC BAA-871 / DC3000).